Here is a 314-residue protein sequence, read N- to C-terminus: Putative methylthioribose-1-phosphate isomerase (314 aa).

Residues 45 to 47 (RGA), R79, and Q177 contribute to the substrate site. D218 acts as the Proton donor in catalysis. A substrate-binding site is contributed by 227–228 (NK).

Belongs to the eIF-2B alpha/beta/delta subunits family. MtnA subfamily.

It carries out the reaction 5-(methylsulfanyl)-alpha-D-ribose 1-phosphate = 5-(methylsulfanyl)-D-ribulose 1-phosphate. Functionally, catalyzes the interconversion of methylthioribose-1-phosphate (MTR-1-P) into methylthioribulose-1-phosphate (MTRu-1-P). The sequence is that of Putative methylthioribose-1-phosphate isomerase from Methanosphaera stadtmanae (strain ATCC 43021 / DSM 3091 / JCM 11832 / MCB-3).